A 382-amino-acid chain; its full sequence is Cholinephosphotransferase 1 (382 aa).

Residues Met1–Ala51 are Cytoplasmic-facing. Residues Pro52–Tyr72 traverse the membrane as a helical segment. Position 53 (Asn53) interacts with CDP-choline. Residues Tyr73–Pro82 lie on the Lumenal side of the membrane. The chain crosses the membrane as a helical span at residues Gly83–Ala107. Residues Asp100 and Asp103 each contribute to the Mg(2+) site. Residue Arg108 coordinates CDP-choline. The Cytoplasmic segment spans residues Arg108–Ser114. Residues Ala115 to Cys139 form a helical membrane-spanning segment. Asp121 contributes to the Mg(2+) binding site. Residue His122 is the Proton acceptor of the active site. Asp125 lines the Mg(2+) pocket. At Cys140–Met149 the chain is on the lumenal side. Residues Phe150 to Tyr168 form a helical membrane-spanning segment. Over Val169–Asp179 the chain is Cytoplasmic. A helical membrane pass occupies residues Val180–Phe196. The Lumenal segment spans residues Thr197–Val211. A helical transmembrane segment spans residues Asn212–Met237. Topologically, residues Asn238–Leu254 are cytoplasmic. Residues Thr255–Ile270 traverse the membrane as a helical segment. Topologically, residues Phe271–His282 are lumenal. The chain crosses the membrane as a helical span at residues Pro283–His305. Over Met306–Phe318 the chain is Cytoplasmic. Residues Ile319–Gln328 traverse the membrane as a helical segment. The Lumenal portion of the chain corresponds to Tyr329–Asp335. A helical membrane pass occupies residues Glu336–His365. Residues Leu366–Asp382 are Cytoplasmic-facing.

This sequence belongs to the CDP-alcohol phosphatidyltransferase class-I family. The cofactor is Mg(2+). It depends on Mn(2+) as a cofactor.

The protein resides in the golgi apparatus membrane. The catalysed reaction is CDP-choline + a 1,2-diacyl-sn-glycerol = a 1,2-diacyl-sn-glycero-3-phosphocholine + CMP + H(+). The enzyme catalyses 1-octadecanoyl-2-(5Z,8Z,11Z,14Z-eicosatetraenoyl)-sn-glycerol + CDP-choline = 1-octadecanoyl-2-(5Z,8Z,11Z,14Z-eicosatetraenoyl)-sn-glycero-3-phosphocholine + CMP + H(+). It catalyses the reaction 1-hexadecanoyl-2-(9Z-octadecenoyl)-sn-glycerol + CDP-choline = 1-hexadecanoyl-2-(9Z-octadecenoyl)-sn-glycero-3-phosphocholine + CMP + H(+). It carries out the reaction 1-hexadecanoyl-2-(4Z,7Z,10Z,13Z,16Z,19Z-docosahexaenoyl)-sn-glycerol + CDP-choline = 1-hexadecanoyl-2-(4Z,7Z,10Z,13Z,16Z,19Z-docosahexaenoyl)-sn-glycero-3-phosphocholine + CMP + H(+). The catalysed reaction is 1,2-dioctanoyl-sn-glycerol + CDP-choline = 1,2-dioctanoyl-sn-glycero-3-phosphocholine + CMP + H(+). Its pathway is phospholipid metabolism; phosphatidylcholine biosynthesis; phosphatidylcholine from phosphocholine: step 2/2. Functionally, catalyzes the final step of de novo phosphatidylcholine (PC) synthesis, i.e. the transfer of choline phosphate from CDP-choline to the free hydroxyl of a diacylglycerol (DAG), producing a PC. It thereby plays a central role in the formation and maintenance of vesicular membranes. The protein is Cholinephosphotransferase 1 (chpt1) of Danio rerio (Zebrafish).